The following is a 499-amino-acid chain: Tyrosine-protein kinase Blk (499 aa).

A disordered region spans residues 1–34 (MGLLSSKRQVSEKGKGWSPVKIRTQDKAPPPLPP). G2 carries N-myristoyl glycine lipidation. The region spanning 52–112 (EEERFVVALF…PSNFVAPVET (61 aa)) is the SH3 domain. The 97-residue stretch at 118–214 (WFFRTISRKD…GLCQKLTLPC (97 aa)) folds into the SH2 domain. The region spanning 235 to 488 (LKLVRKLGSG…FLQSVLEDFY (254 aa)) is the Protein kinase domain. ATP contacts are provided by residues 241–249 (LGSGQFGEV) and K263. D354 acts as the Proton acceptor in catalysis. Y383 carries the post-translational modification Phosphotyrosine; by autocatalysis.

The protein belongs to the protein kinase superfamily. Tyr protein kinase family. SRC subfamily. As to quaternary structure, interacts with CBL (via SH2 domain). Interacts with CD79A and CD79B (via SH2 domain). Phosphorylated on tyrosine residues after antibody-mediated surface engagement of the B-cell antigen receptor (BCR). In terms of processing, ubiquitination of activated BLK by the UBE3A ubiquitin protein ligase leads to its degradation by the ubiquitin-proteasome pathway. Expressed in immature Vgamma2 gamma-delta T-cells (at protein level). Expressed in the B-cell lineage.

Its subcellular location is the cell membrane. It carries out the reaction L-tyrosyl-[protein] + ATP = O-phospho-L-tyrosyl-[protein] + ADP + H(+). Its activity is regulated as follows. Antibody-mediated surface engagement of the B-cell antigen receptor (BCR) which results in the phosphorylation of BLK on tyrosine residues, stimulates the enzymatic activity. Functionally, non-receptor tyrosine kinase involved in B-lymphocyte development, differentiation and signaling. B-cell receptor (BCR) signaling requires a tight regulation of several protein tyrosine kinases and phosphatases, and associated coreceptors. Binding of antigen to the B-cell antigen receptor (BCR) triggers signaling that ultimately leads to B-cell activation. Signaling through BLK plays an important role in transmitting signals through surface immunoglobulins and supports the pro-B to pre-B transition, as well as the signaling for growth arrest and apoptosis downstream of B-cell receptor. Specifically binds and phosphorylates CD79A at 'Tyr-188'and 'Tyr-199', as well as CD79B at 'Tyr-196' and 'Tyr-207'. Also phosphorylates the immunoglobulin G receptor FCGR2. With FYN and LYN, plays an essential role in pre-B-cell receptor (pre-BCR)-mediated NF-kappa-B activation. Also contributes to BTK activation by indirectly stimulating BTK intramolecular autophosphorylation. In pancreatic islets, acts as a modulator of beta-cells function through the up-regulation of PDX1 and NKX6-1 and consequent stimulation of insulin secretion in response to glucose. Phosphorylates CGAS, promoting retention of CGAS in the cytosol. This chain is Tyrosine-protein kinase Blk (Blk), found in Mus musculus (Mouse).